Consider the following 392-residue polypeptide: Formate-dependent phosphoribosylglycinamide formyltransferase (392 aa).

Residues 22 to 23 (EL) and Glu-82 each bind N(1)-(5-phospho-beta-D-ribosyl)glycinamide. ATP is bound by residues Arg-114, Lys-155, 160–165 (SSGKGQ), 195–198 (EGVV), and Glu-203. The 190-residue stretch at 119–308 (RLAAEELQLP…EFALHVRAFL (190 aa)) folds into the ATP-grasp domain. Mg(2+) contacts are provided by Glu-267 and Glu-279. Residues Asp-286, Lys-355, and 362–363 (RR) contribute to the N(1)-(5-phospho-beta-D-ribosyl)glycinamide site.

Belongs to the PurK/PurT family. Homodimer.

The enzyme catalyses N(1)-(5-phospho-beta-D-ribosyl)glycinamide + formate + ATP = N(2)-formyl-N(1)-(5-phospho-beta-D-ribosyl)glycinamide + ADP + phosphate + H(+). Its pathway is purine metabolism; IMP biosynthesis via de novo pathway; N(2)-formyl-N(1)-(5-phospho-D-ribosyl)glycinamide from N(1)-(5-phospho-D-ribosyl)glycinamide (formate route): step 1/1. Involved in the de novo purine biosynthesis. Catalyzes the transfer of formate to 5-phospho-ribosyl-glycinamide (GAR), producing 5-phospho-ribosyl-N-formylglycinamide (FGAR). Formate is provided by PurU via hydrolysis of 10-formyl-tetrahydrofolate. The sequence is that of Formate-dependent phosphoribosylglycinamide formyltransferase from Shigella flexneri.